A 446-amino-acid chain; its full sequence is Maltoporin (446 aa).

A signal peptide spans Met-1–Ala-25.

The protein belongs to the porin LamB (TC 1.B.3) family. Homotrimer formed of three 18-stranded antiparallel beta-barrels, containing three independent channels.

The protein localises to the cell outer membrane. It catalyses the reaction beta-maltose(in) = beta-maltose(out). Its function is as follows. Involved in the transport of maltose and maltodextrins. The protein is Maltoporin of Escherichia coli O8 (strain IAI1).